The chain runs to 463 residues: tRNA-2-methylthio-N(6)-dimethylallyladenosine synthase (463 aa).

Positions 5–125 (RKLHIKSYGC…LPQLLAKAEQ (121 aa)) constitute an MTTase N-terminal domain. Residues C14, C50, C88, C166, C170, and C173 each contribute to the [4Fe-4S] cluster site. Positions 152 to 384 (RARGISAFVT…QQLIDQQQSA (233 aa)) constitute a Radical SAM core domain. In terms of domain architecture, TRAM spans 387 to 449 (KAAIGRTVEV…RYSLLGELAS (63 aa)).

This sequence belongs to the methylthiotransferase family. MiaB subfamily. As to quaternary structure, monomer. Requires [4Fe-4S] cluster as cofactor.

It is found in the cytoplasm. The catalysed reaction is N(6)-dimethylallyladenosine(37) in tRNA + (sulfur carrier)-SH + AH2 + 2 S-adenosyl-L-methionine = 2-methylsulfanyl-N(6)-dimethylallyladenosine(37) in tRNA + (sulfur carrier)-H + 5'-deoxyadenosine + L-methionine + A + S-adenosyl-L-homocysteine + 2 H(+). Catalyzes the methylthiolation of N6-(dimethylallyl)adenosine (i(6)A), leading to the formation of 2-methylthio-N6-(dimethylallyl)adenosine (ms(2)i(6)A) at position 37 in tRNAs that read codons beginning with uridine. The sequence is that of tRNA-2-methylthio-N(6)-dimethylallyladenosine synthase from Rhodopseudomonas palustris (strain TIE-1).